The sequence spans 241 residues: Proteasome subunit beta type-1 (241 aa).

At Met1 the chain carries N-acetylmethionine. A propeptide spanning residues 1 to 28 is cleaved from the precursor; sequence MLSSTAMYSAPGRDLGMEPHRAAGPLQL. Ser58 carries an O-linked (GlcNAc) serine glycan. Residues Ser62 and Ser68 each carry the phosphoserine modification. Position 150 is a phosphotyrosine (Tyr150). Ser162 is modified (phosphoserine). Lys204 is modified (N6-acetyllysine). Ser209 carries O-linked (GlcNAc) serine glycosylation.

The protein belongs to the peptidase T1B family. In terms of assembly, the 26S proteasome consists of a 20S proteasome core and two 19S regulatory subunits. The 20S proteasome core is a barrel-shaped complex made of 28 subunits that are arranged in four stacked rings. The two outer rings are each formed by seven alpha subunits, and the two inner rings are formed by seven beta subunits. The proteolytic activity is exerted by three beta-subunits PSMB5, PSMB6 and PSMB7. Interacts with SERPINB2. Interacts with RFPL4A. As to quaternary structure, (Microbial infection) Interacts with HIV-1 protein Tat.

The protein localises to the cytoplasm. It localises to the nucleus. Non-catalytic component of the 20S core proteasome complex involved in the proteolytic degradation of most intracellular proteins. This complex plays numerous essential roles within the cell by associating with different regulatory particles. Associated with two 19S regulatory particles, forms the 26S proteasome and thus participates in the ATP-dependent degradation of ubiquitinated proteins. The 26S proteasome plays a key role in the maintenance of protein homeostasis by removing misfolded or damaged proteins that could impair cellular functions, and by removing proteins whose functions are no longer required. Associated with the PA200 or PA28, the 20S proteasome mediates ubiquitin-independent protein degradation. This type of proteolysis is required in several pathways including spermatogenesis (20S-PA200 complex) or generation of a subset of MHC class I-presented antigenic peptides (20S-PA28 complex). The protein is Proteasome subunit beta type-1 of Homo sapiens (Human).